Reading from the N-terminus, the 207-residue chain is Large ribosomal subunit protein uL4 (207 aa).

Residues 45–57 (RQGTHSVKNRSTV) show a composition bias toward polar residues. The disordered stretch occupies residues 45 to 77 (RQGTHSVKNRSTVSGGGRKPWRQKGTGNARQGS).

The protein belongs to the universal ribosomal protein uL4 family. In terms of assembly, part of the 50S ribosomal subunit.

In terms of biological role, one of the primary rRNA binding proteins, this protein initially binds near the 5'-end of the 23S rRNA. It is important during the early stages of 50S assembly. It makes multiple contacts with different domains of the 23S rRNA in the assembled 50S subunit and ribosome. Forms part of the polypeptide exit tunnel. This is Large ribosomal subunit protein uL4 from Oenococcus oeni (strain ATCC BAA-331 / PSU-1).